A 212-amino-acid polypeptide reads, in one-letter code: MSRILAVHASPRGERSQSRRLAEVFLAAYREAHPQARVARREVGRVPLPAVTEAFVAAAFHPQPEQRSLAMQADLALSDQLVGELFDSDLLVISTPMYNFSVPSGLKAWIDQIVRLGVTFDFVLDNGVAQYRPLLRGKRALIVTSRGGHGFGPGGENQAMNHADPWLRTALGFIGIDEVTVVAAEGEESGGRSFEDSCDEAEQRLLALARSA.

FMN is bound by residues Ser10, 16–18 (SQS), and 97–100 (MYNF). Substrate contacts are provided by Asn99 and Tyr131. FMN is bound by residues 145-148 (SRGG) and Glu187. Glu188 contributes to the substrate binding site.

Belongs to the azoreductase type 1 family. Homodimer. Homotetramer formed by a dimer of dimers when the ionic strength is high. It depends on FMN as a cofactor.

It catalyses the reaction 2 a quinone + NADPH + H(+) = 2 a 1,4-benzosemiquinone + NADP(+). The enzyme catalyses 2 a quinone + NADH + H(+) = 2 a 1,4-benzosemiquinone + NAD(+). It carries out the reaction N,N-dimethyl-1,4-phenylenediamine + anthranilate + 2 NAD(+) = 2-(4-dimethylaminophenyl)diazenylbenzoate + 2 NADH + 2 H(+). Azoreductase activity increases with salt strength. Functionally, quinone reductase that provides resistance to thiol-specific stress caused by electrophilic quinones. Shows a preference for benzoquinones. In terms of biological role, also exhibits azoreductase activity. Catalyzes the reductive cleavage of the azo bond in aromatic azo compounds to the corresponding amines. NADPH is the preferred electron donor for azoreductase activity, but it can also use NADH. Can reduce different classes of azo dyes, including the common azo dyes methyl red and p-aminoazobenzene sulfonamide (PAABSA). Can activate several azo pro-drugs used in the treatment of inflammatory bowel disease (IBD), including balsalazide, sulfasalazine and olsalazine. Also acts as a nitrodeductase, and can reduce and hence activate the nitroaromatic drug nitrofurazone, a broad spectrum antibiotic. The protein is FMN-dependent NAD(P)H:quinone oxidoreductase 1 of Pseudomonas aeruginosa (strain ATCC 15692 / DSM 22644 / CIP 104116 / JCM 14847 / LMG 12228 / 1C / PRS 101 / PAO1).